The primary structure comprises 268 residues: Hemin import ATP-binding protein HmuV (268 aa).

The ABC transporter domain occupies 5-242; it reads IEARHLSKRA…ETIRDIFEID (238 aa). Residue 37-44 participates in ATP binding; sequence GPNGAGKS.

The protein belongs to the ABC transporter superfamily. Heme (hemin) importer (TC 3.A.1.14.5) family. In terms of assembly, the complex is composed of two ATP-binding proteins (HmuV), two transmembrane proteins (HmuU) and a solute-binding protein (HmuT).

The protein resides in the cell inner membrane. Its function is as follows. Part of the ABC transporter complex HmuTUV involved in hemin import. Responsible for energy coupling to the transport system. This chain is Hemin import ATP-binding protein HmuV, found in Bradyrhizobium diazoefficiens (strain JCM 10833 / BCRC 13528 / IAM 13628 / NBRC 14792 / USDA 110).